Reading from the N-terminus, the 542-residue chain is Phosphoenolpyruvate carboxykinase (ATP) (542 aa).

Substrate-binding residues include Arg-67, Tyr-208, and Lys-214. ATP is bound by residues Lys-214, His-233, and 249–257 (GLSGTGKTT). Mn(2+)-binding residues include Lys-214 and His-233. Asp-270 is a binding site for Mn(2+). ATP contacts are provided by residues Glu-298, Arg-334, 450-451 (RI), and Thr-456. Position 334 (Arg-334) interacts with substrate.

The protein belongs to the phosphoenolpyruvate carboxykinase (ATP) family. In terms of assembly, monomer. The cofactor is Mn(2+).

It is found in the cytoplasm. It carries out the reaction oxaloacetate + ATP = phosphoenolpyruvate + ADP + CO2. It functions in the pathway carbohydrate biosynthesis; gluconeogenesis. In terms of biological role, involved in the gluconeogenesis. Catalyzes the conversion of oxaloacetate (OAA) to phosphoenolpyruvate (PEP) through direct phosphoryl transfer between the nucleoside triphosphate and OAA. The sequence is that of Phosphoenolpyruvate carboxykinase (ATP) from Vibrio vulnificus (strain CMCP6).